The following is a 542-amino-acid chain: Putative DEAD-box ATP-dependent RNA helicase 43 (542 aa).

The Q motif signature appears at 97-125; sequence KNFMDMKFPSPLLRMLKDKGIMHPTPIQV. Residues 128–312 form the Helicase ATP-binding domain; sequence LPVVLSGRDM…TSALVKPVTV (185 aa). Residue 141-148 coordinates ATP; the sequence is AFTGSGKT. Positions 260–263 match the DEAD box motif; it reads DEAD. One can recognise a Helicase C-terminal domain in the interval 323 to 483; sequence DVIQEVEYVK…RIPPVLAELN (161 aa). A CCHC-type zinc finger spans residues 499 to 516; it reads KGCAYCGGLGHRILQCPK.

It belongs to the DEAD box helicase family. DDX41 subfamily.

The enzyme catalyses ATP + H2O = ADP + phosphate + H(+). The protein is Putative DEAD-box ATP-dependent RNA helicase 43 (RH43) of Arabidopsis thaliana (Mouse-ear cress).